Consider the following 137-residue polypeptide: Beta-synuclein (137 aa).

Repeat copies occupy residues 20 to 30 (EKTKQGVTEAA) and 31 to 41 (EKTKEGVLYVG). The interval 20-67 (EKTKQGVTEAAEKTKEGVLYVGSKTKEGVVQGVASVAEKTKEQASHLG) is 4 X 11 AA tandem repeats of [EGS]-K-T-K-[EQ]-[GQ]-V-X(4). The 3; approximate repeat unit spans residues 42-56 (SKTKEGVVQGVASVA). Copy 4 of the repeat occupies 57 to 67 (EKTKEQASHLG). A compositionally biased stretch (basic and acidic residues) spans 88-97 (EFPTDLKPEE). The disordered stretch occupies residues 88 to 137 (EFPTDLKPEEVAQEAAEEPLIEPLMEPEGESYEDSPQEEYQEYEPEAKGP). Residues 98 to 131 (VAQEAAEEPLIEPLMEPEGESYEDSPQEEYQEYE) show a composition bias toward acidic residues. Serine 118 is subject to Phosphoserine; by BARK1, CK2 and GRK5.

This sequence belongs to the synuclein family. Phosphorylated. Phosphorylation by G-protein coupled receptor kinases (GRK) is more efficient than phosphorylation by CK1, CK2 and CaM-kinase II. As to expression, expressed specifically in brain.

The protein resides in the cytoplasm. Its function is as follows. May be involved in neuronal plasticity. The sequence is that of Beta-synuclein (Sncb) from Rattus norvegicus (Rat).